The sequence spans 105 residues: Large ribosomal subunit protein uL24 (105 aa).

The protein belongs to the universal ribosomal protein uL24 family. Part of the 50S ribosomal subunit.

One of two assembly initiator proteins, it binds directly to the 5'-end of the 23S rRNA, where it nucleates assembly of the 50S subunit. Its function is as follows. One of the proteins that surrounds the polypeptide exit tunnel on the outside of the subunit. This Staphylococcus epidermidis (strain ATCC 35984 / DSM 28319 / BCRC 17069 / CCUG 31568 / BM 3577 / RP62A) protein is Large ribosomal subunit protein uL24.